Consider the following 101-residue polypeptide: Pro-corazonin (101 aa).

Positions 1-16 (MLVLFVLSLVVSCALC) are cleaved as a signal peptide. Position 27 is an asparagine amide (Asn-27). A propeptide spanning residues 31-101 (SNFPAEISAL…REKAPNNDNY (71 aa)) is cleaved from the precursor.

This sequence belongs to the corazonin family. In terms of tissue distribution, expressed in central brain and the retrocerebral complex but not in antennal lobes, optic lobes or in gnathal, thoracic and abdominal ganglia (at protein level).

It localises to the secreted. Functionally, cardioactive peptide. Corazonin is probably involved in the physiological regulation of the heart beat. The protein is Pro-corazonin of Camponotus floridanus (Florida carpenter ant).